We begin with the raw amino-acid sequence, 290 residues long: Pyridoxal kinase PdxY (290 aa).

Residues Ser-12 and 47–48 contribute to the substrate site; that span reads TQ. Residues Asp-114, Glu-151, Lys-184, and 211–214 contribute to the ATP site; that span reads RPLL. Asp-225 contributes to the substrate binding site.

The protein belongs to the pyridoxine kinase family. PdxY subfamily. Homodimer. Mg(2+) serves as cofactor.

It catalyses the reaction pyridoxal + ATP = pyridoxal 5'-phosphate + ADP + H(+). The protein operates within cofactor metabolism; pyridoxal 5'-phosphate salvage; pyridoxal 5'-phosphate from pyridoxal: step 1/1. In terms of biological role, pyridoxal kinase involved in the salvage pathway of pyridoxal 5'-phosphate (PLP). Catalyzes the phosphorylation of pyridoxal to PLP. The protein is Pyridoxal kinase PdxY of Pseudomonas putida (strain W619).